The sequence spans 582 residues: PTS system lactose-specific EIICB component (582 aa).

Positions 8–409 (IEKGKPFFEK…VVDVIIYYPF (402 aa)) constitute a PTS EIIC type-3 domain. 9 helical membrane passes run 30–50 (GFIA…ITYV), 64–84 (GILM…VAGT), 103–123 (INFI…AADP), 137–157 (KGLL…NFFV), 176–196 (VFKD…LDLL), 222–242 (GWIG…VGIH), 283–303 (FVAT…FMWL), 339–359 (VFFI…KFFV), and 381–401 (IVMG…LIVV). Residues 453 to 473 (ASEADTDDTSSVDETTSTSST) are disordered. Over residues 464–473 (VDETTSTSST) the composition is skewed to low complexity. One can recognise a PTS EIIB type-3 domain in the interval 479–582 (QTNVLVLCAG…LEFVKQQFNN (104 aa)). Cys-486 (phosphocysteine intermediate; for EIIB activity) is an active-site residue. Position 486 is a phosphocysteine; by EIIA (Cys-486).

It is found in the cell membrane. The enzyme catalyses lactose(out) + N(pros)-phospho-L-histidyl-[protein] = lactose 6-phosphate(in) + L-histidyl-[protein]. Functionally, the phosphoenolpyruvate-dependent sugar phosphotransferase system (sugar PTS), a major carbohydrate active transport system, catalyzes the phosphorylation of incoming sugar substrates concomitantly with their translocation across the cell membrane. The enzyme II LacEF PTS system is involved in lactose transport. The sequence is that of PTS system lactose-specific EIICB component from Staphylococcus epidermidis (strain ATCC 35984 / DSM 28319 / BCRC 17069 / CCUG 31568 / BM 3577 / RP62A).